The sequence spans 140 residues: Arsenate-mycothiol transferase ArsC1 (140 aa).

This sequence belongs to the low molecular weight phosphotyrosine protein phosphatase family.

The protein resides in the cytoplasm. It catalyses the reaction mycothiol + arsenate = arseno-mycothiol + H2O. In terms of biological role, involved in defense against toxic arsenate. Involved in the mycothiol/myoredoxin redox pathway which uses a mycothioltransferase mechanism; facilitates adduct formation between arsenate and mycothiol. In Corynebacterium glutamicum (strain ATCC 13032 / K051), this protein is Arsenate-mycothiol transferase ArsC1 (arsC1).